Here is a 421-residue protein sequence, read N- to C-terminus: 2',3'-cyclic-nucleotide 3'-phosphodiesterase (421 aa).

Phosphoserine occurs at positions 6 and 9. Residue Tyr110 is modified to Phosphotyrosine. Residue Ser170 is modified to Phosphoserine. His251 (proton acceptor) is an active-site residue. Thr253 lines the substrate pocket. Catalysis depends on His330, which acts as the Proton donor. Substrate is bound at residue Thr332. Ser359 carries the post-translational modification Phosphoserine. Cys418 carries the post-translational modification Cysteine methyl ester. The S-farnesyl cysteine moiety is linked to residue Cys418. Positions 419–421 (TII) are cleaved as a propeptide — removed in mature form.

The protein belongs to the 2H phosphoesterase superfamily. CNPase family. Exists as monomers and homodimers.

The protein resides in the membrane. It is found in the melanosome. The enzyme catalyses a nucleoside 2',3'-cyclic phosphate + H2O = a nucleoside 2'-phosphate + H(+). Catalyzes the formation of 2'-nucleotide products from 2',3'-cyclic substrates. May participate in RNA metabolism in the myelinating cell, CNP is the third most abundant protein in central nervous system myelin. The chain is 2',3'-cyclic-nucleotide 3'-phosphodiesterase from Homo sapiens (Human).